Reading from the N-terminus, the 1802-residue chain is U3 small nucleolar RNA-associated protein 10 (1802 aa).

Residues 581 to 618 (MDLQALLPFVLVTLADPSERVRREAAGILTIIGSLHKN) form an HEAT 1 repeat. The next 2 helical transmembrane spans lie at 946–966 (VQSG…AIVN) and 1002–1022 (ALLL…HSVM). HEAT repeat units follow at residues 1046-1083 (QTID…AFEH), 1253-1290 (LSLV…QNPE), 1297-1335 (TRML…KYGK), and 1758-1795 (ALLP…VLGE).

This sequence belongs to the HEATR1/UTP10 family. In terms of assembly, component of the ribosomal small subunit (SSU) processome.

It is found in the nucleus. It localises to the nucleolus. Its subcellular location is the membrane. Functionally, involved in nucleolar processing of pre-18S ribosomal RNA. Involved in ribosome biosynthesis. The protein is U3 small nucleolar RNA-associated protein 10 of Aspergillus oryzae (strain ATCC 42149 / RIB 40) (Yellow koji mold).